The sequence spans 240 residues: Flavin-dependent thymidylate synthase (240 aa).

A ThyX domain is found at 13–235 (ITVELVKHSA…PETHAAFEKQ (223 aa)). FAD contacts are provided by residues S64, 87 to 89 (RHR), and E95. Residues 84 to 87 (EFMR), 95 to 99 (EESGR), and R167 contribute to the dUMP site. The ThyX motif motif lies at 87–97 (RHRIASYNEES). Residues 183-185 (NAR) and N189 each bind FAD. A dUMP-binding site is contributed by R194. R194 (involved in ionization of N3 of dUMP, leading to its activation) is an active-site residue.

This sequence belongs to the thymidylate synthase ThyX family. In terms of assembly, homotetramer. FAD is required as a cofactor.

It catalyses the reaction dUMP + (6R)-5,10-methylene-5,6,7,8-tetrahydrofolate + NADPH + H(+) = dTMP + (6S)-5,6,7,8-tetrahydrofolate + NADP(+). It functions in the pathway pyrimidine metabolism; dTTP biosynthesis. In terms of biological role, catalyzes the reductive methylation of 2'-deoxyuridine-5'-monophosphate (dUMP) to 2'-deoxythymidine-5'-monophosphate (dTMP) while utilizing 5,10-methylenetetrahydrofolate (mTHF) as the methyl donor, and NADPH and FADH(2) as the reductant. The polypeptide is Flavin-dependent thymidylate synthase (Tropheryma whipplei (strain TW08/27) (Whipple's bacillus)).